The primary structure comprises 515 residues: MRKIKFFDTTLRDGEQSAGVNLNLQEKLEIARQLERLQVDIIEAGFPASSKGDFEAVKQIAETVRTCSVTGLSRSVRSDIDAAWEALKGGAEPRLHLFIATSPIHMVHKLRMTPEQVIEAAVEAVKYAKRFFPIVQWSAEDACRSELPFLAKIVTEVIKAGASVINIPDTVGYITPKEYGEIFLYLRNNVPNIENISLSAHCHDDLGMAVINSLSAIEHGATQVECTINGIGERAGNAALEEIAVALHIRKDYYQVETRLNLQEIKRTSNLVSKLTGMVVPPNKAVVGKNAFAHESGIHQDGVLKEKTTYEIISPELVGVSSNSMVLGKHSGRHALRNRVEELGYTLSEEEINQLFVRFKELADKKKDVTDDDLIALIFEEKFDHFKDFYQLSSIQVQYGTNQIPTAVVVLKDGKGNTIQEAATGAGSVEALYNTLERCFQTAVTLLDYRIESVGGGRDALAQVFVKVRVNDVETSGRGTAQDVLEASAKAYINAMNRMFMIEAMRAENEKVTTP.

Positions 4–266 constitute a Pyruvate carboxyltransferase domain; the sequence is IKFFDTTLRD…ETRLNLQEIK (263 aa). Asp-13, His-201, His-203, and Asn-237 together coordinate Mn(2+). The tract at residues 391–515 is regulatory domain; the sequence is QLSSIQVQYG…RAENEKVTTP (125 aa).

It belongs to the alpha-IPM synthase/homocitrate synthase family. LeuA type 1 subfamily. Homodimer. Requires Mn(2+) as cofactor.

Its subcellular location is the cytoplasm. The enzyme catalyses 3-methyl-2-oxobutanoate + acetyl-CoA + H2O = (2S)-2-isopropylmalate + CoA + H(+). It participates in amino-acid biosynthesis; L-leucine biosynthesis; L-leucine from 3-methyl-2-oxobutanoate: step 1/4. Its function is as follows. Catalyzes the condensation of the acetyl group of acetyl-CoA with 3-methyl-2-oxobutanoate (2-ketoisovalerate) to form 3-carboxy-3-hydroxy-4-methylpentanoate (2-isopropylmalate). This chain is 2-isopropylmalate synthase, found in Geobacillus thermodenitrificans (strain NG80-2).